An 88-amino-acid chain; its full sequence is Large ribosomal subunit protein bL31B (88 aa).

This sequence belongs to the bacterial ribosomal protein bL31 family. Type B subfamily. As to quaternary structure, part of the 50S ribosomal subunit.

The sequence is that of Large ribosomal subunit protein bL31B from Glaesserella parasuis serovar 5 (strain SH0165) (Haemophilus parasuis).